The chain runs to 347 residues: Selenide, water dikinase 2 (347 aa).

U18 is an active-site residue. Position 18 (U18) is a non-standard amino acid, selenocysteine. ATP contacts are provided by residues K21 and 48–50 (TSD). D51 serves as a coordination point for Mg(2+). ATP-binding positions include D68, D91, and 138 to 140 (GHT). D91 is a Mg(2+) binding site. D226 is a binding site for Mg(2+).

The protein belongs to the selenophosphate synthase 1 family. Class I subfamily. Homodimer. It depends on Mg(2+) as a cofactor.

The catalysed reaction is hydrogenselenide + ATP + H2O = selenophosphate + AMP + phosphate + 2 H(+). Its function is as follows. Synthesizes selenophosphate from selenide and ATP. The chain is Selenide, water dikinase 2 from Peptoclostridium acidaminophilum (Eubacterium acidaminophilum).